The primary structure comprises 662 residues: UvrABC system protein B (662 aa).

Positions 31–188 (DNIEGGEKAQ…NDLVDIQFER (158 aa)) constitute a Helicase ATP-binding domain. Position 44–51 (44–51 (GATGTGKT)) interacts with ATP. The Beta-hairpin motif lies at 97–120 (YYDYYQPEAYVPSSDTYIEKDSSV). The Helicase C-terminal domain occupies 435-601 (QIDDLLGEIN…TIKKEIRDLI (167 aa)). A UVR domain is found at 626–661 (KDMIKKLEGQMQEAAGLLDFELAAQIRDMILEIKAM).

It belongs to the UvrB family. As to quaternary structure, forms a heterotetramer with UvrA during the search for lesions. Interacts with UvrC in an incision complex.

It is found in the cytoplasm. Its function is as follows. The UvrABC repair system catalyzes the recognition and processing of DNA lesions. A damage recognition complex composed of 2 UvrA and 2 UvrB subunits scans DNA for abnormalities. Upon binding of the UvrA(2)B(2) complex to a putative damaged site, the DNA wraps around one UvrB monomer. DNA wrap is dependent on ATP binding by UvrB and probably causes local melting of the DNA helix, facilitating insertion of UvrB beta-hairpin between the DNA strands. Then UvrB probes one DNA strand for the presence of a lesion. If a lesion is found the UvrA subunits dissociate and the UvrB-DNA preincision complex is formed. This complex is subsequently bound by UvrC and the second UvrB is released. If no lesion is found, the DNA wraps around the other UvrB subunit that will check the other stand for damage. This chain is UvrABC system protein B, found in Streptococcus gordonii (strain Challis / ATCC 35105 / BCRC 15272 / CH1 / DL1 / V288).